We begin with the raw amino-acid sequence, 944 residues long: MSDYKHTLNLPETAFPMRGNLAQREPKMLEQWYETDLYGQIRKAKAGKPKFILHDGPPYANGQIHIGHAVNKILKDVIVKAKTLSDFDAPYVPGWDCHGLPIELQVEKKHGKPGKKLNLAEFREKCREYAMTQIDQQRTDFKRLGVLGDWDNPYLTMNFKQEADSVRALAKIIDNGHMHQGFKPVHWCTDCGSALAEAEVEYQDKNSPAIDVRMPVAATAETVDRFSTPEGHVGEGNVSMVIWTTTPWTIPANRAVTLAEGLEYTLVQVEASDDQPAERVILADDLVNDCMERWNITHYHKLGFCKGKDLEGLQLQHPLFELQVPVILGDHVTTESGTGCVHTAPGHGVDDFLVGQKYGIEVYNPVGDNGVYKDDTPLFAGQHVFKANEPIVDKLREVGNLMHAESYRHSYPHCWRHKTPIIFRATPQWFISMDKKGLRAGALEQIKKVDWFPEWGQSRIESMVEGRPDWCISRQRTWGNPIAIFVNRETEELHPNTLELMEKVAQLIEKDGVQAWFDLEPETLLGDEADKYRKVTDTLDVWFDSGVTHHCVLREFDGLRWPADLYLEGSDQHRGWFQSSLVTGVAMYDEAPYHQVLTHGFTVDAQGRKMSKSIGNVVAPQDVMNKLGGDILRLWVASADYSGEMTVSDEILKRSADAYRRIRNTSRFLLANLSGFDPKQDLVAKEDMVELDRWIVGRAADLQNELLEAYNNYQFHSVVQKLMHFCSIELGSFYLDIIKDRQYTAKSEGLARRSCQTALYHIAEALVRWMAPICSFTAQEIWDLLPNERSQYVFTESWYQGFDEFSGVKDAENEFWMQLLEIRDVVNQALEQSRRDDVIGGSLQAEVTLYADDELAAALNRLGEELRFALLTSEAQVASINDAPADAVKAEKMALAVSVTKSEYKKCERCWHHREEVGTLENHSDLCQRCVTNIEGEGEERRFA.

Residues 58 to 68 (PYANGQIHIGH) carry the 'HIGH' region motif. Glu568 lines the L-isoleucyl-5'-AMP pocket. Positions 609 to 613 (KMSKS) match the 'KMSKS' region motif. Lys612 contributes to the ATP binding site. Cys907, Cys910, Cys927, and Cys930 together coordinate Zn(2+).

The protein belongs to the class-I aminoacyl-tRNA synthetase family. IleS type 1 subfamily. In terms of assembly, monomer. The cofactor is Zn(2+).

The protein resides in the cytoplasm. It carries out the reaction tRNA(Ile) + L-isoleucine + ATP = L-isoleucyl-tRNA(Ile) + AMP + diphosphate. Its function is as follows. Catalyzes the attachment of isoleucine to tRNA(Ile). As IleRS can inadvertently accommodate and process structurally similar amino acids such as valine, to avoid such errors it has two additional distinct tRNA(Ile)-dependent editing activities. One activity is designated as 'pretransfer' editing and involves the hydrolysis of activated Val-AMP. The other activity is designated 'posttransfer' editing and involves deacylation of mischarged Val-tRNA(Ile). This chain is Isoleucine--tRNA ligase, found in Idiomarina loihiensis (strain ATCC BAA-735 / DSM 15497 / L2-TR).